A 116-amino-acid polypeptide reads, in one-letter code: Nucleoid-associated protein SACE_0254 (116 aa).

The segment at 90–116 (LQQEKMGPVTGALGGGQGLGGLGLPGL) is disordered. Residues 101 to 116 (ALGGGQGLGGLGLPGL) are compositionally biased toward gly residues.

It belongs to the YbaB/EbfC family. As to quaternary structure, homodimer.

It is found in the cytoplasm. Its subcellular location is the nucleoid. Its function is as follows. Binds to DNA and alters its conformation. May be involved in regulation of gene expression, nucleoid organization and DNA protection. The polypeptide is Nucleoid-associated protein SACE_0254 (Saccharopolyspora erythraea (strain ATCC 11635 / DSM 40517 / JCM 4748 / NBRC 13426 / NCIMB 8594 / NRRL 2338)).